The primary structure comprises 165 residues: Protein SprT (165 aa).

One can recognise a SprT-like domain in the interval 20 to 163 (EKLAQANLKL…RCVHCGEQLV (144 aa)). Zn(2+) is bound at residue His-78. Residue Glu-79 is part of the active site. His-82 contacts Zn(2+).

The protein belongs to the SprT family. The cofactor is Zn(2+).

The protein localises to the cytoplasm. This is Protein SprT from Shigella flexneri serotype 5b (strain 8401).